A 146-amino-acid chain; its full sequence is Snaclec echicetin subunit beta (146 aa).

Positions 1–23 (MGRFISVSFGLLVLLLSLSGTGA) are cleaved as a signal peptide. 3 cysteine pairs are disulfide-bonded: C25–C36, C53–C142, and C119–C134. One can recognise a C-type lectin domain in the interval 32 to 143 (YEGYCYKVFK…CTWTFSFVCK (112 aa)).

Belongs to the snaclec family. In terms of assembly, heterodimer of subunits alpha and beta; disulfide-linked. As to expression, expressed by the venom gland.

The protein localises to the secreted. Binding of echicetin to glycoprotein Ibalpha (GP1BA) receptor on platelets alone results in inhibition of platelet aggregation, while binding to both GPIba receptor and IgMk promotes platelet aggregation and signal transduction. This is Snaclec echicetin subunit beta from Echis carinatus (Saw-scaled viper).